A 261-amino-acid chain; its full sequence is Ribosomal RNA small subunit methyltransferase J (261 aa).

S-adenosyl-L-methionine-binding positions include 129–130 (ER) and D182.

Belongs to the methyltransferase superfamily. RsmJ family.

It localises to the cytoplasm. The enzyme catalyses guanosine(1516) in 16S rRNA + S-adenosyl-L-methionine = N(2)-methylguanosine(1516) in 16S rRNA + S-adenosyl-L-homocysteine + H(+). In terms of biological role, specifically methylates the guanosine in position 1516 of 16S rRNA. In Desulfotalea psychrophila (strain LSv54 / DSM 12343), this protein is Ribosomal RNA small subunit methyltransferase J.